The following is a 712-amino-acid chain: Polyribonucleotide nucleotidyltransferase (712 aa).

Residues Asp-493 and Asp-499 each contribute to the Mg(2+) site. The region spanning 560–619 is the KH domain; it reads PRLLTFKVDPEDIGKIIGPGGKMVRSITEATGAKVDISDDGTITVSSSVGGQAEAARAMI. Residues 629 to 697 form the S1 motif domain; sequence GQVYLGKVTR…HKGRVNLTRL (69 aa).

It belongs to the polyribonucleotide nucleotidyltransferase family. It depends on Mg(2+) as a cofactor.

The protein resides in the cytoplasm. The enzyme catalyses RNA(n+1) + phosphate = RNA(n) + a ribonucleoside 5'-diphosphate. Its function is as follows. Involved in mRNA degradation. Catalyzes the phosphorolysis of single-stranded polyribonucleotides processively in the 3'- to 5'-direction. This Synechococcus sp. (strain JA-3-3Ab) (Cyanobacteria bacterium Yellowstone A-Prime) protein is Polyribonucleotide nucleotidyltransferase.